We begin with the raw amino-acid sequence, 274 residues long: Cytochrome b-c1 complex subunit Rieske, mitochondrial (274 aa).

Topologically, residues 79-103 are mitochondrial matrix; it reads SHTDVKVPDFSEYRRLEVLDSTKSS. Residues 104–140 form a helical membrane-spanning segment; it reads RESSEARKGFSYLVTGVTTVGVAYAAKNAVTQFVSSM. Topologically, residues 141–274 are mitochondrial intermembrane; that stretch reads SASADVLALA…FTSDDMVIVG (134 aa). The region spanning 187-272 is the Rieske domain; it reads EAAVELSQLR…YEFTSDDMVI (86 aa). Residues Cys-217, His-219, Cys-236, His-239, and Ser-241 each contribute to the [2Fe-2S] cluster site. A disulfide bridge links Cys-222 with Cys-238.

Belongs to the Rieske iron-sulfur protein family. Component of the ubiquinol-cytochrome c oxidoreductase (cytochrome b-c1 complex, complex III, CIII), a multisubunit enzyme composed of 11 subunits. The complex is composed of 3 respiratory subunits cytochrome b, cytochrome c1 and Rieske protein UQCRFS1, 2 core protein subunits UQCRC1/QCR1 and UQCRC2/QCR2, and 6 low-molecular weight protein subunits UQCRH/QCR6, UQCRB/QCR7, UQCRQ/QCR8, UQCR10/QCR9, UQCR11/QCR10 and subunit 9, the cleavage product of Rieske protein UQCRFS1. The complex exists as an obligatory dimer and forms supercomplexes (SCs) in the inner mitochondrial membrane with NADH-ubiquinone oxidoreductase (complex I, CI) and cytochrome c oxidase (complex IV, CIV), resulting in different assemblies (supercomplex SCI(1)III(2)IV(1) and megacomplex MCI(2)III(2)IV(2)). Incorporation of the Rieske protein UQCRFS1 is the penultimate step in complex III assembly. Interacts with TTC19, which is involved in the clearance of UQCRFS1 fragments. In terms of assembly, component of the ubiquinol-cytochrome c oxidoreductase (cytochrome b-c1 complex, complex III, CIII). Subunit 9 corresponds to the mitochondrial targeting sequence (MTS) of Rieske protein UQCRFS1. It is retained after processing and incorporated inside complex III, where it remains bound to the complex and localizes between the 2 core subunits UQCRC1/QCR1 and UQCRC2/QCR2. [2Fe-2S] cluster is required as a cofactor. Proteolytic processing is necessary for the correct insertion of UQCRFS1 in the complex III dimer. Several fragments are generated during UQCRFS1 insertion, most probably due to the endogenous matrix-processing peptidase (MPP) activity of the 2 core protein subunits UQCRC1/QCR1 and UQCRC2/QCR2, which are homologous to the 2 mitochondrial-processing peptidase (MPP) subunits beta-MPP and alpha-MPP respectively. The action of the protease is also necessary for the clearance of the UQCRFS1 fragments.

It localises to the mitochondrion inner membrane. It carries out the reaction a quinol + 2 Fe(III)-[cytochrome c](out) = a quinone + 2 Fe(II)-[cytochrome c](out) + 2 H(+)(out). Component of the ubiquinol-cytochrome c oxidoreductase, a multisubunit transmembrane complex that is part of the mitochondrial electron transport chain which drives oxidative phosphorylation. The respiratory chain contains 3 multisubunit complexes succinate dehydrogenase (complex II, CII), ubiquinol-cytochrome c oxidoreductase (cytochrome b-c1 complex, complex III, CIII) and cytochrome c oxidase (complex IV, CIV), that cooperate to transfer electrons derived from NADH and succinate to molecular oxygen, creating an electrochemical gradient over the inner membrane that drives transmembrane transport and the ATP synthase. The cytochrome b-c1 complex catalyzes electron transfer from ubiquinol to cytochrome c, linking this redox reaction to translocation of protons across the mitochondrial inner membrane, with protons being carried across the membrane as hydrogens on the quinol. In the process called Q cycle, 2 protons are consumed from the matrix, 4 protons are released into the intermembrane space and 2 electrons are passed to cytochrome c. The Rieske protein is a catalytic core subunit containing a [2Fe-2S] iron-sulfur cluster. It cycles between 2 conformational states during catalysis to transfer electrons from the quinol bound in the Q(0) site in cytochrome b to cytochrome c1. Incorporation of UQCRFS1 is the penultimate step in complex III assembly. Functionally, component of the ubiquinol-cytochrome c oxidoreductase (cytochrome b-c1 complex, complex III, CIII). UQCRFS1 undergoes proteolytic processing once it is incorporated in the complex III dimer. One of the fragments, called subunit 9, corresponds to its mitochondrial targeting sequence (MTS). The proteolytic processing is necessary for the correct insertion of UQCRFS1 in the complex III dimer, but the persistence of UQCRFS1-derived fragments may prevent newly imported UQCRFS1 to be processed and assembled into complex III and is detrimental for the complex III structure and function. The sequence is that of Cytochrome b-c1 complex subunit Rieske, mitochondrial (UQCRFS1) from Pan paniscus (Pygmy chimpanzee).